A 410-amino-acid polypeptide reads, in one-letter code: F-box protein At5g36730 (410 aa).

In terms of domain architecture, F-box spans 1–46; it reads MAMSNLPRDLLEEVLSRVPVKSIAAVRSTCKNWNSLTYGQSFTKKL.

This is F-box protein At5g36730 from Arabidopsis thaliana (Mouse-ear cress).